Here is a 678-residue protein sequence, read N- to C-terminus: NADPH--cytochrome P450 reductase (678 aa).

G2 carries the N-acetylglycine modification. Topologically, residues 2–22 are lumenal; the sequence is GDSNVDTGTTTSEMVAEEVSL. The chain crosses the membrane as a helical span at residues 23–43; that stretch reads FSATDMVLFSLIVGLLTYWFI. The Cytoplasmic segment spans residues 44–678; the sequence is FRKKKDEVPE…KGRYSLDVWS (635 aa). S63 is modified (phosphoserine). Residues 80 to 224 enclose the Flavodoxin-like domain; that stretch reads IIVFYGSQTG…DFITWREQFW (145 aa). FMN contacts are provided by residues 86–91, 138–141, 173–182, and D208; these read SQTGTA, ATYG, and LGNKTYEHFN. Residues 279-521 form the FAD-binding FR-type domain; the sequence is KNPFLAVVTT…FVRKSQFRLP (243 aa). An NADP(+)-binding site is contributed by R298. Residues R424, 454-457, 472-474, Y478, and 488-491 each bind FAD; these read RYYS, CAV, and GVAT. NADP(+) contacts are provided by residues T535, 596 to 597, 602 to 606, and D639; these read SR and KVYVQ. FAD is bound at residue W677.

Belongs to the NADPH--cytochrome P450 reductase family. It in the N-terminal section; belongs to the flavodoxin family. This sequence in the C-terminal section; belongs to the flavoprotein pyridine nucleotide cytochrome reductase family. FAD is required as a cofactor. FMN serves as cofactor.

It localises to the endoplasmic reticulum membrane. It catalyses the reaction 2 oxidized [cytochrome P450] + NADPH = 2 reduced [cytochrome P450] + NADP(+) + H(+). In terms of biological role, this enzyme is required for electron transfer from NADP to cytochrome P450 in microsomes. It can also provide electron transfer to heme oxygenase and cytochrome B5. This Sus scrofa (Pig) protein is NADPH--cytochrome P450 reductase.